Consider the following 246-residue polypeptide: Cell division protein ZapD (246 aa).

The protein belongs to the ZapD family. Interacts with FtsZ.

It localises to the cytoplasm. Functionally, cell division factor that enhances FtsZ-ring assembly. Directly interacts with FtsZ and promotes bundling of FtsZ protofilaments, with a reduction in FtsZ GTPase activity. This chain is Cell division protein ZapD, found in Vibrio atlanticus (strain LGP32) (Vibrio splendidus (strain Mel32)).